The primary structure comprises 103 residues: UPF0473 protein SSA_2239 (103 aa).

Belongs to the UPF0473 family.

This is UPF0473 protein SSA_2239 from Streptococcus sanguinis (strain SK36).